Here is a 470-residue protein sequence, read N- to C-terminus: Sugar transporter ERD6-like 8 (470 aa).

Residues 1–16 (METRKDDMEKRNDKSE) are compositionally biased toward basic and acidic residues. The segment at 1-24 (METRKDDMEKRNDKSEPLLLPENG) is disordered. 12 consecutive transmembrane segments (helical) span residues 33–53 (WMVY…GTCV), 73–93 (QFSV…ITSG), 110–130 (VISA…PLDF), 133–153 (FLTG…IAEI), 164–184 (TLNQ…GAVV), 188–208 (TLAL…WFIP), 270–290 (FVIV…NGVI), 307–327 (GSIL…TLLI), 335–355 (LLMA…NSFL), 373–393 (GVLV…WVIM), 409–429 (VTVV…FLMI), and 434–454 (GTFY…AKLV).

Belongs to the major facilitator superfamily. Sugar transporter (TC 2.A.1.1) family.

Its subcellular location is the membrane. Functionally, sugar transporter. The chain is Sugar transporter ERD6-like 8 from Arabidopsis thaliana (Mouse-ear cress).